Consider the following 340-residue polypeptide: Phosphoribosylformylglycinamidine cyclo-ligase (340 aa).

It belongs to the AIR synthase family.

The protein localises to the cytoplasm. It catalyses the reaction 2-formamido-N(1)-(5-O-phospho-beta-D-ribosyl)acetamidine + ATP = 5-amino-1-(5-phospho-beta-D-ribosyl)imidazole + ADP + phosphate + H(+). The protein operates within purine metabolism; IMP biosynthesis via de novo pathway; 5-amino-1-(5-phospho-D-ribosyl)imidazole from N(2)-formyl-N(1)-(5-phospho-D-ribosyl)glycinamide: step 2/2. The chain is Phosphoribosylformylglycinamidine cyclo-ligase from Streptococcus sanguinis (strain SK36).